The sequence spans 623 residues: UvrABC system protein C (623 aa).

The GIY-YIG domain occupies 21–100; the sequence is AEPGVYLMRD…IKTHQPPYNV (80 aa). In terms of domain architecture, UVR spans 210–245; the sequence is DELIRELQEKMIQAAEQENYEAAARYRDQIRGLEQL.

Belongs to the UvrC family. In terms of assembly, interacts with UvrB in an incision complex.

The protein resides in the cytoplasm. Functionally, the UvrABC repair system catalyzes the recognition and processing of DNA lesions. UvrC both incises the 5' and 3' sides of the lesion. The N-terminal half is responsible for the 3' incision and the C-terminal half is responsible for the 5' incision. The polypeptide is UvrABC system protein C (Synechococcus sp. (strain JA-2-3B'a(2-13)) (Cyanobacteria bacterium Yellowstone B-Prime)).